A 119-amino-acid polypeptide reads, in one-letter code: Circadian clock oscillator protein KaiB (119 aa).

Belongs to the KaiB family. In terms of assembly, the KaiABC complex composition changes during the circadian cycle to control KaiC phosphorylation. Complexes KaiC(6), KaiA(2-4):KaiC(6), KaiB(6):KaiC(6) and KaiC(6):KaiB(6):KaiA(12) are among the most important forms, many form cooperatively. Undergoes a major conformational rearrangment; in the free state forms homotetramers as a dimer of dimers. When bound to the CI domain of KaiC switches to a monomeric thioredoxin-fold (KaiB(fs)). KaiB(fs) binds CikA, leading it to dephosphorylate phospho-RpaA.

Key component of the KaiABC oscillator complex, which constitutes the main circadian regulator in cyanobacteria. Complex composition changes during the circadian cycle to control KaiC phosphorylation. KaiA stimulates KaiC autophosphorylation, while KaiB sequesters KaiA, leading to KaiC autodephosphorylation. Phospho-Ser-431 KaiC accumulation triggers binding of KaiB to form the KaiB(6):KaiC(6) complex, leading to changes in output regulators CikA and SasA. KaiB switches to a thioredoxin-like fold (KaiB(fs)) when bound to KaiC. KaiB(6):KaiC(6) formation exposes a site for KaiA binding that sequesters KaiA from KaiC, making the KaiC(6):KaiB(6):KaiA(12) complex that results in KaiC autodephosphorylation. In terms of biological role, a metamorphic protein which reversibly switches between an inactive tetrameric fold and a rare, thioredoxin-like monomeric fold (KaiB(fs)). KaiB(fs) binds phospho-KaiC, KaiA and CikA. KaiA and CikA compete for binding to KaiB(fs), and KaiB(fs) and SasA compete for binding to KaiC, thus the clock oscillator and output signal pathway are tightly coupled. The sequence is that of Circadian clock oscillator protein KaiB from Synechococcus sp. (strain CC9311).